We begin with the raw amino-acid sequence, 804 residues long: Lon protease 2 (804 aa).

The Lon N-terminal domain occupies 19–216 (VPILPLRNSV…LVLAMVGRQL (198 aa)). Position 367-374 (367-374 (GPPGVGKT)) interacts with ATP. One can recognise a Lon proteolytic domain in the interval 603-784 (TLQPGVATGL…EEILPLVLEP (182 aa)). Active-site residues include S690 and K733. The interval 782–804 (LEPPRRAPAQSASPEELEEQAGV) is disordered.

The protein belongs to the peptidase S16 family. Homohexamer. Organized in a ring with a central cavity.

It localises to the cytoplasm. The enzyme catalyses Hydrolysis of proteins in presence of ATP.. ATP-dependent serine protease that mediates the selective degradation of mutant and abnormal proteins as well as certain short-lived regulatory proteins. Required for cellular homeostasis and for survival from DNA damage and developmental changes induced by stress. Degrades polypeptides processively to yield small peptide fragments that are 5 to 10 amino acids long. Binds to DNA in a double-stranded, site-specific manner. This chain is Lon protease 2, found in Sorangium cellulosum (strain So ce56) (Polyangium cellulosum (strain So ce56)).